The sequence spans 135 residues: Transcriptional activator protein (135 aa).

A Nuclear localization signal motif is present at residues 17-32 (KVQHRAAKRKRIRRKR). A zinc finger lies at 37-54 (CGCSYYVHINCHNHGFTH). The disordered stretch occupies residues 77 to 115 (LFQDHSTRQQTVRNEPGHNNRPDTVQPQPEESVGTTSML). Residues 98–114 (PDTVQPQPEESVGTTSM) show a composition bias toward polar residues. A transactivation region spans residues 120–135 (GLDDLTASDLAFLEGI).

The protein belongs to the geminiviridae transcriptional activator protein family. In terms of assembly, monomer. Homodimer. Homooligomer. Self-interaction correlates with nuclear localization and efficient activation of transcription. Monomers suppress local silencing by interacting with and inactivating host adenosine kinase 2 (ADK2) in the cytoplasm. Interacts with and inhibits host SNF1 kinase. Binds to ssDNA. In terms of processing, phosphorylated.

Its subcellular location is the host nucleus. It localises to the host cytoplasm. Strong activator of the late viral genes promoters. Enhances the expression of the capsid protein and nuclear shuttle protein. Acts as a suppressor of RNA-mediated gene silencing, also known as post-transcriptional gene silencing (PTGS), a mechanism of plant viral defense that limits the accumulation of viral RNAs. Suppresses the host RNA silencing by inhibiting adenosine kinase 2 (ADK2), a kinase involved in a general methylation pathway. Also suppresses the host basal defense by interacting with and inhibiting SNF1 kinase, a key regulator of cell metabolism implicated in innate antiviral defense. Determines pathogenicity. The protein is Transcriptional activator protein of Indian cassava mosaic virus (ICMV).